Here is a 188-residue protein sequence, read N- to C-terminus: Large ribosomal subunit protein bL35m (188 aa).

This sequence belongs to the bacterial ribosomal protein bL35 family.

The protein localises to the mitochondrion. The protein is Large ribosomal subunit protein bL35m (MRPL35) of Pongo abelii (Sumatran orangutan).